The primary structure comprises 519 residues: MWPLRFNNRFIDVLPCDPEVSLRSRQVLEAWSRVAPTPVPMPCLLAYSSEVAAILNFDAEELVTPRFVEVFSGNALYTGMQPYAVNYGGHQFGQWVGQLGDGRVITLGELLGADGVYYELQLKGAGPTPYSRGADGRAVLRSSIREFLCSEAMHHLGIPTTRALSLIATGDTVIRDMLYDGHPAPEPSAIVCRVAPSFIRFGTFELPASRGDIDLLRRLVEFTIIRDYPHLHGAGETLYADWFAEICTRTAELVAHWMRVGFVHGVMNTDNMSILGLTIDYGPYGWIDNNDLDWTPNVTDVQSRRYRFGAQPQVAYWNLGCLARALAPLFSDAASLQAGLERFRATYLAAERRDAAAKLGFAACFDEDLELFDALRTCMHQAEMDMTLTFLGLADWEPNMPDSLSLWAEAFYDPVKRDAQAPMLRDWLQRYAARLSVDPLPVAERHERMRLANPRYVLRNYLTQQAIECAEQGDLTELHALLEVMRRPYDFQLGREAYAMRRPEWARSRIGCSMLSCSS.

Residues Gly100, Gly102, Arg103, Lys123, Asp135, Gly136, Arg193, and Arg200 each contribute to the ATP site. Asp270 functions as the Proton acceptor in the catalytic mechanism. Mg(2+) is bound by residues Asn271 and Asp280. An ATP-binding site is contributed by Asp280.

It belongs to the SELO family. Requires Mg(2+) as cofactor. Mn(2+) is required as a cofactor.

The enzyme catalyses L-seryl-[protein] + ATP = 3-O-(5'-adenylyl)-L-seryl-[protein] + diphosphate. It catalyses the reaction L-threonyl-[protein] + ATP = 3-O-(5'-adenylyl)-L-threonyl-[protein] + diphosphate. It carries out the reaction L-tyrosyl-[protein] + ATP = O-(5'-adenylyl)-L-tyrosyl-[protein] + diphosphate. The catalysed reaction is L-histidyl-[protein] + UTP = N(tele)-(5'-uridylyl)-L-histidyl-[protein] + diphosphate. The enzyme catalyses L-seryl-[protein] + UTP = O-(5'-uridylyl)-L-seryl-[protein] + diphosphate. It catalyses the reaction L-tyrosyl-[protein] + UTP = O-(5'-uridylyl)-L-tyrosyl-[protein] + diphosphate. Nucleotidyltransferase involved in the post-translational modification of proteins. It can catalyze the addition of adenosine monophosphate (AMP) or uridine monophosphate (UMP) to a protein, resulting in modifications known as AMPylation and UMPylation. The protein is Protein nucleotidyltransferase YdiU of Xylella fastidiosa (strain Temecula1 / ATCC 700964).